Consider the following 335-residue polypeptide: Transcriptional activator NphR (335 aa).

One can recognise an HTH araC/xylS-type domain in the interval 231-329 (TRVQRVIEQN…GSSPGLYRKE (99 aa)). 2 DNA-binding regions (H-T-H motif) span residues 249–270 (SDIAAAAGMSLRTVHKLFNAEG) and 296–319 (VADVSECAGFRDVSHFSRLFRSTF).

Its function is as follows. Transcriptional activator of nphA1 and nphA2 involved in the degradation of 4-nitrophenol (4-NP). This is Transcriptional activator NphR (nphR) from Rhodococcus sp.